We begin with the raw amino-acid sequence, 541 residues long: Tyrosine-protein phosphatase non-receptor type 5 (541 aa).

Positions 1–55 (MCCSERLLGLPQPVEMEAPDEAEGLPSKQKEMPPPPPPSPPSEPAQKLPPQGAGS) are disordered. The span at 32 to 43 (MPPPPPPSPPSE) shows a compositional bias: pro residues. The next 2 helical transmembrane spans lie at 64 to 84 (LCLF…LSGH) and 122 to 142 (LLLV…WHLL). A Phosphoserine; by PKA modification is found at serine 221. Phosphothreonine; by MAPK is present on threonine 231. The residue at position 244 (serine 244) is a Phosphoserine; by MAPK. Residues 276–531 (LQAEFFEIPM…QFVHHAMSLY (256 aa)) form the Tyrosine-protein phosphatase domain. Substrate is bound by residues aspartate 437, 472–478 (CSAGIGR), and glutamine 516. Cysteine 472 acts as the Phosphocysteine intermediate in catalysis.

It belongs to the protein-tyrosine phosphatase family. Non-receptor class subfamily. In terms of processing, phosphorylation at Ser-221 by PKA deactivates PTPN5. Phosphorylation at Thr-231 and Ser-244 by MAPKs stabilizes the phosphatase, dephosphorylation of these sites results in ubiquitin-mediated degradation of the active phosphatase. In terms of tissue distribution, STEP20 is expressed only in the CNS.

It is found in the endoplasmic reticulum membrane. Its subcellular location is the cytoplasm. The catalysed reaction is O-phospho-L-tyrosyl-[protein] + H2O = L-tyrosyl-[protein] + phosphate. In terms of biological role, may regulate the activity of several effector molecules involved in synaptic plasticity and neuronal cell survival, including MAPKs, Src family kinases and NMDA receptors. In Mus musculus (Mouse), this protein is Tyrosine-protein phosphatase non-receptor type 5 (Ptpn5).